The following is a 603-amino-acid chain: UvrABC system protein C (603 aa).

The GIY-YIG domain maps to 15 to 92 (DQPGCYLMKD…IKKHDPRFNI (78 aa)). Residues 197–232 (KTVKNDLMKKMQEAAENMEFEKAGEFRDQINAIETT) form the UVR domain.

This sequence belongs to the UvrC family. In terms of assembly, interacts with UvrB in an incision complex.

The protein localises to the cytoplasm. Functionally, the UvrABC repair system catalyzes the recognition and processing of DNA lesions. UvrC both incises the 5' and 3' sides of the lesion. The N-terminal half is responsible for the 3' incision and the C-terminal half is responsible for the 5' incision. The protein is UvrABC system protein C of Listeria monocytogenes serotype 4b (strain F2365).